The following is a 307-amino-acid chain: Serine/threonine-protein phosphatase PP2A-3 catalytic subunit (307 aa).

The Mn(2+) site is built by aspartate 55, histidine 57, aspartate 83, and asparagine 115. Histidine 116 (proton donor) is an active-site residue. 2 residues coordinate Mn(2+): histidine 165 and histidine 239.

It belongs to the PPP phosphatase family. PP-2A subfamily. Mn(2+) is required as a cofactor.

The protein resides in the cytoplasm. The enzyme catalyses O-phospho-L-seryl-[protein] + H2O = L-seryl-[protein] + phosphate. The catalysed reaction is O-phospho-L-threonyl-[protein] + H2O = L-threonyl-[protein] + phosphate. This is Serine/threonine-protein phosphatase PP2A-3 catalytic subunit (PP2A3) from Oryza sativa subsp. indica (Rice).